The primary structure comprises 78 residues: Metallothionein-like protein type 2 (78 aa).

It belongs to the metallothionein superfamily. Type 15 family.

Functionally, metallothioneins have a high content of cysteine residues that bind various heavy metals. This Actinidia deliciosa (Kiwi) protein is Metallothionein-like protein type 2.